A 313-amino-acid polypeptide reads, in one-letter code: GMP synthase [glutamine-hydrolyzing] subunit B (313 aa).

The GMPS ATP-PPase domain occupies 6–190 (KVWEKFIEEK…LGLPEKIYNR (185 aa)). Position 33-39 (33-39 (SGGVDSS)) interacts with ATP.

As to quaternary structure, heterodimer composed of a glutamine amidotransferase subunit (A) and a GMP-binding subunit (B).

It carries out the reaction XMP + L-glutamine + ATP + H2O = GMP + L-glutamate + AMP + diphosphate + 2 H(+). Its pathway is purine metabolism; GMP biosynthesis; GMP from XMP (L-Gln route): step 1/1. Functionally, catalyzes the synthesis of GMP from XMP. This chain is GMP synthase [glutamine-hydrolyzing] subunit B (guaAB), found in Pyrococcus furiosus (strain ATCC 43587 / DSM 3638 / JCM 8422 / Vc1).